Here is a 130-residue protein sequence, read N- to C-terminus: Small ribosomal subunit protein uS8 (130 aa).

The protein belongs to the universal ribosomal protein uS8 family. In terms of assembly, part of the 30S ribosomal subunit.

Functionally, one of the primary rRNA binding proteins, it binds directly to 16S rRNA central domain where it helps coordinate assembly of the platform of the 30S subunit. The protein is Small ribosomal subunit protein uS8 of Methanothermococcus thermolithotrophicus (Methanococcus thermolithotrophicus).